The sequence spans 213 residues: ATP phosphoribosyltransferase (213 aa).

The protein belongs to the ATP phosphoribosyltransferase family. Short subfamily. As to quaternary structure, heteromultimer composed of HisG and HisZ subunits.

The protein resides in the cytoplasm. The enzyme catalyses 1-(5-phospho-beta-D-ribosyl)-ATP + diphosphate = 5-phospho-alpha-D-ribose 1-diphosphate + ATP. Its pathway is amino-acid biosynthesis; L-histidine biosynthesis; L-histidine from 5-phospho-alpha-D-ribose 1-diphosphate: step 1/9. Its function is as follows. Catalyzes the condensation of ATP and 5-phosphoribose 1-diphosphate to form N'-(5'-phosphoribosyl)-ATP (PR-ATP). Has a crucial role in the pathway because the rate of histidine biosynthesis seems to be controlled primarily by regulation of HisG enzymatic activity. The protein is ATP phosphoribosyltransferase of Methylococcus capsulatus (strain ATCC 33009 / NCIMB 11132 / Bath).